A 312-amino-acid polypeptide reads, in one-letter code: Peptide methionine sulfoxide reductase MsrA/MsrB 1 (312 aa).

The interval 1-155 (MAEIYLAGGC…PSGYCHIDVT (155 aa)) is peptide methionine sulfoxide reductase. Cys-10 is a catalytic residue. Residues 172-295 (QEVLKASLSE…NSASLRFVAK (124 aa)) form the MsrB domain. Catalysis depends on Cys-284, which acts as the Nucleophile.

In the N-terminal section; belongs to the MsrA Met sulfoxide reductase family. The protein in the C-terminal section; belongs to the MsrB Met sulfoxide reductase family.

It is found in the cell membrane. The enzyme catalyses L-methionyl-[protein] + [thioredoxin]-disulfide + H2O = L-methionyl-(S)-S-oxide-[protein] + [thioredoxin]-dithiol. It carries out the reaction [thioredoxin]-disulfide + L-methionine + H2O = L-methionine (S)-S-oxide + [thioredoxin]-dithiol. It catalyses the reaction L-methionyl-[protein] + [thioredoxin]-disulfide + H2O = L-methionyl-(R)-S-oxide-[protein] + [thioredoxin]-dithiol. In terms of biological role, has an important function as a repair enzyme for proteins that have been inactivated by oxidation. Catalyzes the reversible oxidation-reduction of methionine sulfoxide in proteins to methionine. This Streptococcus pneumoniae serotype 4 (strain ATCC BAA-334 / TIGR4) protein is Peptide methionine sulfoxide reductase MsrA/MsrB 1 (msrAB1).